The sequence spans 169 residues: Neurotensin/neuromedin N (169 aa).

A signal peptide spans 1 to 22; it reads MIGMNLQLVCLTLLAFSSWSLC.

This sequence belongs to the neurotensin family. Interacts with NTSR1. Interacts with SORT1. Interacts with SORL1. Neurotensin is cleaved and degraded by Angiotensin-converting enzyme (ACE) and neprilysin (MME).

Its subcellular location is the secreted. The protein resides in the cytoplasmic vesicle. It is found in the secretory vesicle. Functionally, neurotensin may play an endocrine or paracrine role in the regulation of fat metabolism. It causes contraction of smooth muscle. The protein is Neurotensin/neuromedin N (Nts) of Rattus norvegicus (Rat).